The following is a 254-amino-acid chain: Caffeoyl-CoA O-methyltransferase (254 aa).

The segment at 1–25 is disordered; it reads MATTNVEENKQTQEQQPKEIKHQEV. Residues 7–25 are compositionally biased toward basic and acidic residues; the sequence is EENKQTQEQQPKEIKHQEV. Residue Lys-28 participates in substrate binding. Residues Thr-70, Glu-92, 94-95, Ser-100, Asp-118, and Ala-147 contribute to the S-adenosyl-L-methionine site; that span reads GV. Asp-170 provides a ligand contact to substrate. Asp-170 is an a divalent metal cation binding site. An S-adenosyl-L-methionine-binding site is contributed by Asp-172. Residues Asp-196 and Asn-197 each contribute to the a divalent metal cation site. Asn-201 contributes to the substrate binding site.

This sequence belongs to the class I-like SAM-binding methyltransferase superfamily. Cation-dependent O-methyltransferase family. CCoAMT subfamily. It depends on a divalent metal cation as a cofactor.

The enzyme catalyses (E)-caffeoyl-CoA + S-adenosyl-L-methionine = (E)-feruloyl-CoA + S-adenosyl-L-homocysteine + H(+). The protein operates within aromatic compound metabolism; phenylpropanoid biosynthesis. Methylates caffeoyl-CoA to feruloyl-CoA and 5-hydroxyferuloyl-CoA to sinapoyl-CoA. Plays a role in the synthesis of feruloylated polysaccharides. Involved in the reinforcement of the plant cell wall. Also involved in the responding to wounding or pathogen challenge by the increased formation of cell wall-bound ferulic acid polymers. In Mesembryanthemum crystallinum (Common ice plant), this protein is Caffeoyl-CoA O-methyltransferase.